The chain runs to 365 residues: tRNA(Met) cytidine acetate ligase (365 aa).

Residues 7 to 20 (IAEF…HKYL), Gly96, Asn152, and Arg175 each bind ATP.

It belongs to the TmcAL family.

It localises to the cytoplasm. It catalyses the reaction cytidine(34) in elongator tRNA(Met) + acetate + ATP = N(4)-acetylcytidine(34) in elongator tRNA(Met) + AMP + diphosphate. In terms of biological role, catalyzes the formation of N(4)-acetylcytidine (ac(4)C) at the wobble position of elongator tRNA(Met), using acetate and ATP as substrates. First activates an acetate ion to form acetyladenylate (Ac-AMP) and then transfers the acetyl group to tRNA to form ac(4)C34. This Streptococcus pneumoniae (strain Taiwan19F-14) protein is tRNA(Met) cytidine acetate ligase.